A 192-amino-acid polypeptide reads, in one-letter code: Peptidyl-tRNA hydrolase (192 aa).

Residue tyrosine 14 coordinates tRNA. Residue histidine 19 is the Proton acceptor of the active site. 3 residues coordinate tRNA: tyrosine 64, asparagine 66, and asparagine 112.

Belongs to the PTH family. As to quaternary structure, monomer.

It is found in the cytoplasm. The catalysed reaction is an N-acyl-L-alpha-aminoacyl-tRNA + H2O = an N-acyl-L-amino acid + a tRNA + H(+). In terms of biological role, hydrolyzes ribosome-free peptidyl-tRNAs (with 1 or more amino acids incorporated), which drop off the ribosome during protein synthesis, or as a result of ribosome stalling. Functionally, catalyzes the release of premature peptidyl moieties from peptidyl-tRNA molecules trapped in stalled 50S ribosomal subunits, and thus maintains levels of free tRNAs and 50S ribosomes. In Anaeromyxobacter dehalogenans (strain 2CP-C), this protein is Peptidyl-tRNA hydrolase.